The following is an 868-amino-acid chain: Translation initiation factor IF-2 (868 aa).

2 stretches are compositionally biased toward basic and acidic residues: residues 156 to 166 (ETVKEEEKINS) and 199 to 209 (SKKEEVKPEKV). Disordered regions lie at residues 156 to 177 (ETVK…QDEL) and 199 to 269 (SKKE…KYRE). The span at 249–260 (RGGRSKFKKKKG) shows a compositional bias: basic residues. In terms of domain architecture, tr-type G spans 368–537 (GRAPVVTIMG…LLQSEVLELK (170 aa)). The interval 377–384 (GHVDHGKT) is G1. 377–384 (GHVDHGKT) is a binding site for GTP. The segment at 402–406 (GITQH) is G2. Residues 423–426 (DTPG) are G3. GTP is bound by residues 423-427 (DTPGH) and 477-480 (NKMD). A G4 region spans residues 477 to 480 (NKMD). The G5 stretch occupies residues 513 to 515 (SAK).

Belongs to the TRAFAC class translation factor GTPase superfamily. Classic translation factor GTPase family. IF-2 subfamily.

The protein resides in the cytoplasm. Its function is as follows. One of the essential components for the initiation of protein synthesis. Protects formylmethionyl-tRNA from spontaneous hydrolysis and promotes its binding to the 30S ribosomal subunits. Also involved in the hydrolysis of GTP during the formation of the 70S ribosomal complex. The sequence is that of Translation initiation factor IF-2 from Legionella pneumophila subsp. pneumophila (strain Philadelphia 1 / ATCC 33152 / DSM 7513).